Here is a 203-residue protein sequence, read N- to C-terminus: MIGKLSGRVDSSYDDYVIIDVSGVGYRVFASAKTLSKLSEGESYKLFIETHVREDHINLYGFLSLEEKSFFNLLQSVNGIGTRMALSILSALTPTDIQIAINNEDKNIFKAISGVGAKLAERIVRELSDKVAKISSSSAAIKDSLNIKGITPVASSEVIKALINMGFSRFEAQNAVQEIITKNPEISIDELIRTALKNRNSNF.

Positions 1–63 (MIGKLSGRVD…EDHINLYGFL (63 aa)) are domain I. Positions 64–142 (SLEEKSFFNL…KISSSSAAIK (79 aa)) are domain II. The tract at residues 143 to 149 (DSLNIKG) is flexible linker. Residues 150-203 (ITPVASSEVIKALINMGFSRFEAQNAVQEIITKNPEISIDELIRTALKNRNSNF) form a domain III region.

This sequence belongs to the RuvA family. In terms of assembly, homotetramer. Forms an RuvA(8)-RuvB(12)-Holliday junction (HJ) complex. HJ DNA is sandwiched between 2 RuvA tetramers; dsDNA enters through RuvA and exits via RuvB. An RuvB hexamer assembles on each DNA strand where it exits the tetramer. Each RuvB hexamer is contacted by two RuvA subunits (via domain III) on 2 adjacent RuvB subunits; this complex drives branch migration. In the full resolvosome a probable DNA-RuvA(4)-RuvB(12)-RuvC(2) complex forms which resolves the HJ.

The protein localises to the cytoplasm. The RuvA-RuvB-RuvC complex processes Holliday junction (HJ) DNA during genetic recombination and DNA repair, while the RuvA-RuvB complex plays an important role in the rescue of blocked DNA replication forks via replication fork reversal (RFR). RuvA specifically binds to HJ cruciform DNA, conferring on it an open structure. The RuvB hexamer acts as an ATP-dependent pump, pulling dsDNA into and through the RuvAB complex. HJ branch migration allows RuvC to scan DNA until it finds its consensus sequence, where it cleaves and resolves the cruciform DNA. This Rickettsia bellii (strain OSU 85-389) protein is Holliday junction branch migration complex subunit RuvA.